The following is a 236-amino-acid chain: MTNSLSAESARVGSGLRIGVLALQGDFREHLRAAAESGAEGVSVRRPRELDGLDGLIIPGGESTAIDKLARAFELAGPLRERIAGGLPVYGSCAGMILLASDIADPATDLSGAPQQTFGGLDMTVRRNAFGRQRESFETDLDFKGLEFSATDADVAPVHAVFIRGPWVERVGPGVEILAQVEPADPEHASHTAELPGAARIVAVRSGRLLATSFHPEVTGEKRVHELFIRMIRGEA.

61 to 63 provides a ligand contact to L-glutamine; sequence GES. Cysteine 93 (nucleophile) is an active-site residue. L-glutamine-binding positions include arginine 127 and 163–164; that span reads IR. Catalysis depends on charge relay system residues histidine 215 and glutamate 217.

Belongs to the glutaminase PdxT/SNO family. As to quaternary structure, in the presence of PdxS, forms a dodecamer of heterodimers. Only shows activity in the heterodimer.

It carries out the reaction aldehydo-D-ribose 5-phosphate + D-glyceraldehyde 3-phosphate + L-glutamine = pyridoxal 5'-phosphate + L-glutamate + phosphate + 3 H2O + H(+). The enzyme catalyses L-glutamine + H2O = L-glutamate + NH4(+). It participates in cofactor biosynthesis; pyridoxal 5'-phosphate biosynthesis. In terms of biological role, catalyzes the hydrolysis of glutamine to glutamate and ammonia as part of the biosynthesis of pyridoxal 5'-phosphate. The resulting ammonia molecule is channeled to the active site of PdxS. In Pseudarthrobacter chlorophenolicus (strain ATCC 700700 / DSM 12829 / CIP 107037 / JCM 12360 / KCTC 9906 / NCIMB 13794 / A6) (Arthrobacter chlorophenolicus), this protein is Pyridoxal 5'-phosphate synthase subunit PdxT.